The sequence spans 1117 residues: Cytospin-A (1117 aa).

Disordered stretches follow at residues 1–176, 293–323, and 358–390; these read MKKA…NQIS, SLSP…GSVE, and SSDD…NASE. Over residues 45-90 the composition is skewed to low complexity; the sequence is TAASLSKTKSSDDLLAGMAGGVTVTNGVKGKKSTCPSAAPSASAPA. Over residues 93–117 the composition is skewed to polar residues; sequence TVENKSKISTGTASSTKRNTSTGNK. Composition is skewed to basic and acidic residues over residues 120–131 and 158–171; these read SSTRERLRERTR and TATE…KSKS. Residues 168–280 are a coiled coil; that stretch reads KSKSDNQISD…LNALGFSLEQ (113 aa). Polar residues predominate over residues 293–303; sequence SLSPEITPGNQ. Low complexity predominate over residues 358–377; sequence SSDDALDAPSSSESEGIPSI. 3 positions are modified to phosphoserine: Ser-384, Ser-385, and Ser-389. Coiled-coil stretches lie at residues 394 to 449 and 487 to 807; these read ACLT…MESL and RYME…RGRV. Ser-868, Ser-881, and Ser-887 each carry phosphoserine. The disordered stretch occupies residues 919 to 1001; that stretch reads RTSSASRPAS…SRIREERKDP (83 aa). Positions 946–956 are enriched in basic and acidic residues; that stretch reads RSSEEMKRDIS. Low complexity predominate over residues 971 to 990; it reads TTSPQLSLSSSPTASVTPTT. The region spanning 1011-1116 is the Calponin-homology (CH) domain; that stretch reads GSKRNALLKW…YVTAIYKYFE (106 aa).

The protein belongs to the cytospin-A family. In terms of assembly, may interact with both microtubules and actin cytoskeleton.

Its subcellular location is the cytoplasm. It localises to the cytoskeleton. The protein localises to the spindle. The protein resides in the cell junction. It is found in the gap junction. Involved in cytokinesis and spindle organization. May play a role in actin cytoskeleton organization and microtubule stabilization and hence required for proper cell adhesion and migration. The polypeptide is Cytospin-A (SPECC1L) (Pan troglodytes (Chimpanzee)).